The following is a 63-amino-acid chain: Large ribosomal subunit protein uL29 (63 aa).

This sequence belongs to the universal ribosomal protein uL29 family.

This is Large ribosomal subunit protein uL29 from Ectopseudomonas mendocina (strain ymp) (Pseudomonas mendocina).